The following is a 291-amino-acid chain: Trimeric intracellular cation channel type B (291 aa).

At 1–15 (MESPWNELTLAFSRT) the chain is on the lumenal side. The helical transmembrane segment at 16 to 33 (SMFPFFDIAHYLVSVMAL) threads the bilayer. At 34-47 (KHQPGAAALAWKNP) the chain is on the cytoplasmic side. Residues 48-69 (LSSWFTAMLHCFGGGILSCVLL) traverse the membrane as a helical segment. At 70–80 (AEPPLRFLANN) the chain is on the lumenal side. Residues 81–100 (TNILLASSIWYIAFFCPCDL) form a helical membrane-spanning segment. Residues 101–103 (ISQ) are Cytoplasmic-facing. A helical transmembrane segment spans residues 104-122 (AYSFLPVQLLAAGMKEVTR). A 1,2-diacyl-sn-glycero-3-phospho-(1D-myo-inositol-4,5-bisphosphate)-binding residues include lysine 118 and arginine 122. At 123–138 (TWKIVGGVTHANSYYK) the chain is on the lumenal side. A helical transmembrane segment spans residues 139 to 156 (NGWIVMIAVGWARGAGGS). Topologically, residues 157–179 (IITNFEQLVKGCWKPEAEEWLKM) are cytoplasmic. A helical membrane pass occupies residues 180-196 (SYPAKVTLLGSVIFTFQ). Over 197–207 (QTKYLAISKHN) the chain is Lumenal. The chain crosses the membrane as a helical span at residues 208 to 225 (LMFLFTVFLVATKITMMI). Residues 226–291 (TKTALVPFAC…VKKKHSKKTE (66 aa)) lie on the Cytoplasmic side of the membrane. Positions 257 to 291 (KSETKSSFNGTGSSTSKPVANASDKVKKKHSKKTE) are disordered. Residues 261 to 274 (KSSFNGTGSSTSKP) show a composition bias toward polar residues. Serine 262 is modified (phosphoserine). Basic residues predominate over residues 282-291 (VKKKHSKKTE).

Belongs to the TMEM38 family. Homotrimer; conformation seems to be controled by binding to diacylglycerol (DAG).

The protein localises to the endoplasmic reticulum membrane. The catalysed reaction is K(+)(in) = K(+)(out). Channel activity is activated by increased cytosolic Ca(2+) levels and blocked by luminal high Ca(2+) levels. Intracellular monovalent cation channel required for maintenance of rapid intracellular calcium release. Acts as a potassium counter-ion channel that functions in synchronization with calcium release from intracellular stores. Activated by increased cytosolic Ca(2+) levels. This is Trimeric intracellular cation channel type B (TMEM38B) from Bos taurus (Bovine).